Consider the following 612-residue polypeptide: Dihydroxy-acid dehydratase (612 aa).

Asp81 contacts Mg(2+). Cys122 serves as a coordination point for [2Fe-2S] cluster. Mg(2+) is bound by residues Asp123 and Lys124. Position 124 is an N6-carboxylysine (Lys124). Cys196 contacts [2Fe-2S] cluster. Glu492 contacts Mg(2+). Ser518 acts as the Proton acceptor in catalysis.

This sequence belongs to the IlvD/Edd family. As to quaternary structure, homodimer. [2Fe-2S] cluster is required as a cofactor. Mg(2+) serves as cofactor.

The catalysed reaction is (2R)-2,3-dihydroxy-3-methylbutanoate = 3-methyl-2-oxobutanoate + H2O. It catalyses the reaction (2R,3R)-2,3-dihydroxy-3-methylpentanoate = (S)-3-methyl-2-oxopentanoate + H2O. It functions in the pathway amino-acid biosynthesis; L-isoleucine biosynthesis; L-isoleucine from 2-oxobutanoate: step 3/4. It participates in amino-acid biosynthesis; L-valine biosynthesis; L-valine from pyruvate: step 3/4. Functionally, functions in the biosynthesis of branched-chain amino acids. Catalyzes the dehydration of (2R,3R)-2,3-dihydroxy-3-methylpentanoate (2,3-dihydroxy-3-methylvalerate) into 2-oxo-3-methylpentanoate (2-oxo-3-methylvalerate) and of (2R)-2,3-dihydroxy-3-methylbutanoate (2,3-dihydroxyisovalerate) into 2-oxo-3-methylbutanoate (2-oxoisovalerate), the penultimate precursor to L-isoleucine and L-valine, respectively. The protein is Dihydroxy-acid dehydratase of Paracoccus denitrificans (strain Pd 1222).